The following is a 160-amino-acid chain: Cytochrome b6-f complex subunit 4 (160 aa).

3 helical membrane passes run 36 to 56, 95 to 115, and 131 to 151; these read LLYI…GLAV, LLGI…PFIE, and SLFL…CLPI.

This sequence belongs to the cytochrome b family. PetD subfamily. The 4 large subunits of the cytochrome b6-f complex are cytochrome b6, subunit IV (17 kDa polypeptide, PetD), cytochrome f and the Rieske protein, while the 4 small subunits are PetG, PetL, PetM and PetN. The complex functions as a dimer.

It localises to the cellular thylakoid membrane. Functionally, component of the cytochrome b6-f complex, which mediates electron transfer between photosystem II (PSII) and photosystem I (PSI), cyclic electron flow around PSI, and state transitions. In Prochlorococcus marinus (strain NATL2A), this protein is Cytochrome b6-f complex subunit 4.